A 371-amino-acid polypeptide reads, in one-letter code: Interstrand DNA cross-link repair glycosylase (371 aa).

Positions 37 to 39 match the QXQ; important for activity motif; that stretch reads QAQ.

The protein belongs to the DNA glycosylase AlkZ-like family.

DNA glycosylase involved in the repair of interstrand DNA cross-links (ICLs), which are highly toxic DNA lesions that covalently tether the opposing strands of DNA, thereby inhibiting essential cellular processes such as DNA replication and transcription. Acts by unhooking both sides of the ICLs, forming abasic (AP) sites on both strands. AlkZ specifically repairs DNA damage induced by azinomycin B (AZB), a natural product with potent antibiotic and antitumor activities that interacts covalently with duplex DNA and forms ICLs. AlkZ thus confers self-resistance to azinomycin B, which is produced by S.sahachiroi. It may also protect target sites by protein-DNA interaction. Binds sequence non-specifically to native DNA and structure-specifically to azinomycin B-modified sites, with higher affinity to azinomycin B-modified sites and lower affinity to native DNA duplex. In vitro, also acts on monoadducts and can catalyze the excision of N7-methylguanine (7mGua) from an oligonucleotide containing N7-methyldeoxyguanosine (d7mG). Is a monofunctional DNA glycosylase that does not have lyase activity. This Streptomyces sahachiroi protein is Interstrand DNA cross-link repair glycosylase.